The sequence spans 432 residues: MAESTVTADSKLTSSDTRRRIWAIVGASSGNLVEWFDFYVYSFCSLYFAHIFFPSGNTTTQLLQTAGVFAAGFLMRPIGGWLFGRIADKHGRKKSMLLSVCMMCFGSLVIACLPGYETIGTWAPALLLLARLFQGLSVGGEYGTSATYMSEVAVEGRKGFYASFQYVTLIGGQLLALLVVVVLQHTMEDAALREWGWRIPFALGAVLAVVALWLRRQLDETSQQETRALKEAGSLKGLWRNRRAFIMVLGFTAAGSLCFYTFTTYMQKYLVNTAGMHANVASGIMTAALFVFMLIQPLIGALSDKIGRRTSMLCFGSLAAIFTVPILSALQNVSSPYAAFGLVMCALLIVSFYTSISGILKAEMFPAQVRALGVGLSYAVANAIFGGSAEYVALSLKSIGMETAFFWYVTLMAVVAFLVSLMLHRKGKGMRL.

Topologically, residues 1–32 (MAESTVTADSKLTSSDTRRRIWAIVGASSGNL) are cytoplasmic. The helical transmembrane segment at 33–53 (VEWFDFYVYSFCSLYFAHIFF) threads the bilayer. Topologically, residues 54-62 (PSGNTTTQL) are periplasmic. The helical transmembrane segment at 63–83 (LQTAGVFAAGFLMRPIGGWLF) threads the bilayer. The Cytoplasmic portion of the chain corresponds to 84 to 95 (GRIADKHGRKKS). The helical transmembrane segment at 96–116 (MLLSVCMMCFGSLVIACLPGY) threads the bilayer. At 117–118 (ET) the chain is on the periplasmic side. A helical transmembrane segment spans residues 119–139 (IGTWAPALLLLARLFQGLSVG). Over 140-162 (GEYGTSATYMSEVAVEGRKGFYA) the chain is Cytoplasmic. The helical transmembrane segment at 163–183 (SFQYVTLIGGQLLALLVVVVL) threads the bilayer. The Periplasmic portion of the chain corresponds to 184–193 (QHTMEDAALR). A helical membrane pass occupies residues 194–214 (EWGWRIPFALGAVLAVVALWL). At 215 to 243 (RRQLDETSQQETRALKEAGSLKGLWRNRR) the chain is on the cytoplasmic side. A helical membrane pass occupies residues 244–264 (AFIMVLGFTAAGSLCFYTFTT). The Periplasmic segment spans residues 265–279 (YMQKYLVNTAGMHAN). Residues 280 to 300 (VASGIMTAALFVFMLIQPLIG) traverse the membrane as a helical segment. Over 301 to 309 (ALSDKIGRR) the chain is Cytoplasmic. Residues 310-330 (TSMLCFGSLAAIFTVPILSAL) traverse the membrane as a helical segment. The Periplasmic segment spans residues 331 to 339 (QNVSSPYAA). The helical transmembrane segment at 340–360 (FGLVMCALLIVSFYTSISGIL) threads the bilayer. Residues 361–373 (KAEMFPAQVRALG) lie on the Cytoplasmic side of the membrane. A helical membrane pass occupies residues 374-394 (VGLSYAVANAIFGGSAEYVAL). Topologically, residues 395 to 402 (SLKSIGME) are periplasmic. Residues 403 to 423 (TAFFWYVTLMAVVAFLVSLML) traverse the membrane as a helical segment. At 424-432 (HRKGKGMRL) the chain is on the cytoplasmic side.

The protein belongs to the major facilitator superfamily. Metabolite:H+ Symporter (MHS) family (TC 2.A.1.6) family.

The protein resides in the cell inner membrane. Functionally, uptake of alpha-ketoglutarate across the boundary membrane with the concomitant import of a cation (symport system). The sequence is that of Alpha-ketoglutarate permease (kgtP) from Escherichia coli (strain K12).